The chain runs to 474 residues: Methylenetetrahydrofolate--tRNA-(uracil-5-)-methyltransferase TrmFO (474 aa).

15–20 (GAGLAG) contributes to the FAD binding site. The disordered stretch occupies residues 453-474 (PLLPTAPDTTGAAGEETTQAES).

This sequence belongs to the MnmG family. TrmFO subfamily. It depends on FAD as a cofactor.

It is found in the cytoplasm. It catalyses the reaction uridine(54) in tRNA + (6R)-5,10-methylene-5,6,7,8-tetrahydrofolate + NADH + H(+) = 5-methyluridine(54) in tRNA + (6S)-5,6,7,8-tetrahydrofolate + NAD(+). It carries out the reaction uridine(54) in tRNA + (6R)-5,10-methylene-5,6,7,8-tetrahydrofolate + NADPH + H(+) = 5-methyluridine(54) in tRNA + (6S)-5,6,7,8-tetrahydrofolate + NADP(+). Catalyzes the folate-dependent formation of 5-methyl-uridine at position 54 (M-5-U54) in all tRNAs. The protein is Methylenetetrahydrofolate--tRNA-(uracil-5-)-methyltransferase TrmFO of Nitratidesulfovibrio vulgaris (strain ATCC 29579 / DSM 644 / CCUG 34227 / NCIMB 8303 / VKM B-1760 / Hildenborough) (Desulfovibrio vulgaris).